Here is a 286-residue protein sequence, read N- to C-terminus: Putative transcription factor kapC (286 aa).

The span at 1–10 shows a compositional bias: pro residues; it reads MQPALAPAPH. A disordered region spans residues 1-120; sequence MQPALAPAPH…QNRAAQRAFR (120 aa). Residues 26-40 are compositionally biased toward low complexity; the sequence is HDQLLAAHQHLSHPQ. The segment covering 41-54 has biased composition (pro residues); that stretch reads QPRPQAPATQPPHM. Positions 55–67 are enriched in polar residues; the sequence is QPNTASPRDQNNI. Residues 81-92 show a composition bias toward pro residues; the sequence is PQTPPQPEPAPQ. The 64-residue stretch at 102–165 folds into the bZIP domain; the sequence is PLSTSKRAAQ…EYIINLQTRL (64 aa). The basic motif stretch occupies residues 103 to 126; the sequence is LSTSKRAAQNRAAQRAFRQRKESY. The span at 108 to 118 shows a compositional bias: low complexity; that stretch reads RAAQNRAAQRA. The interval 130–161 is leucine-zipper; sequence LEEQVKHQEAITEEYKALHAENYQLREYIINL. Positions 197–286 are disordered; sequence RGNAASAGPA…QEPDGLPVVS (90 aa). A compositionally biased stretch (low complexity) spans 198–222; it reads GNAASAGPAPAGPGPQQSQPNQNQG.

The protein belongs to the bZIP family.

It localises to the nucleus. Functionally, putative transcription factor. The chain is Putative transcription factor kapC (kapC) from Aspergillus terreus (strain NIH 2624 / FGSC A1156).